A 365-amino-acid polypeptide reads, in one-letter code: G-protein coupled receptor 4 (365 aa).

Over 1 to 10 the chain is Extracellular; the sequence is MDNSTGTWEG. N-linked (GlcNAc...) asparagine glycosylation occurs at Asn3. A helical transmembrane segment spans residues 11–47; it reads CHVDSRVDHLFPPSLYIFVIGVGLPTNCLALWAAYRQ. Intrachain disulfides connect Cys11/Cys260 and Cys92/Cys170. Residues 48 to 51 are Cytoplasmic-facing; it reads VRQR. Residues 52 to 82 traverse the membrane as a helical segment; the sequence is NELGVYLMNLSIADLLYICTLPLWVDYFLHH. Residues 83-87 lie on the Extracellular side of the membrane; that stretch reads DNWIH. The chain crosses the membrane as a helical span at residues 88–123; it reads GPGSCKLFGFIFYSNIYISIAFLCCISVDRYLAVAH. The Cytoplasmic portion of the chain corresponds to 124-131; that stretch reads PLRFARLR. The chain crosses the membrane as a helical span at residues 132 to 158; the sequence is RVKTAVAVSSVVWATELGANSAPLFHD. The Extracellular segment spans residues 159–174; sequence ELFRDRYNHTFCFEKF. Residues 159–174 form an extracellular loop 2 (ECL2) region; it reads ELFRDRYNHTFCFEKF. Asn166 carries N-linked (GlcNAc...) asparagine glycosylation. A helical membrane pass occupies residues 175-212; that stretch reads PMERWVAWMNLYRVFVGFLFPWALMLLCYRGILRAVQS. Residues 213-216 are Cytoplasmic-facing; sequence SVST. The helical transmembrane segment at 217-252 threads the bilayer; that stretch reads ERQEKVKIKRLALSLIAIVLVCFAPYHALLLSRSAV. Topologically, residues 253 to 262 are extracellular; it reads YLGRPWDCGF. Residues 263 to 291 traverse the membrane as a helical segment; it reads EERVFSAYHSSLAFTSLNCVADPILYCLV. Over 292–365 the chain is Cytoplasmic; it reads NEGARSDVAK…PLKVLLPPAQ (74 aa).

Belongs to the G-protein coupled receptor 1 family.

Its subcellular location is the cell membrane. With respect to regulation, activated by a network of residues that connects an extracellular-facing cavity to Glu-147, a conserved charged residue buried in the transmembrane core of the receptor. Protonation likely drives conformational changes in extracellular loop 2 (ECL2), which stabilizes movement of transmembrane 3 (TM3) and a series of rearrangements that connect the extracellular-facing cavity to Glu-147, a residue only conserved in proton-sensing G-protein coupled receptors. In terms of biological role, proton-sensing G-protein coupled receptor activated by extracellular pH, which is required to monitor pH changes and generate adaptive reactions. Activated by an optimal pH of 6.8-7.2. Ligand binding causes a conformation change that triggers signaling via guanine nucleotide-binding proteins (G proteins) and modulates the activity of downstream effectors, such as adenylate cyclase. GPR4 is mainly coupled to G(s) G proteins and mediates activation of adenylate cyclase activity. May also couple with G(q) and G(12)/G(13) G proteins. Acts as a key regulator of respiratory sensitivity to CO2/H(+) in brain retrotrapezoid nucleus neurons: acts by mediating detection of protons generated by the formation of carbonic acid in the blood, an important mechanism to impulse to breathe. Also acts as a regulator of acid secretion in the kidney collecting duct by maintaining acid-base homeostasis in the kidney. Acidosis-induced GPR4 activation increases paracellular gap formation and permeability of vascular endothelial cells, possibly through the G(12)/G(13)/Rho GTPase signaling pathway. This chain is G-protein coupled receptor 4, found in Rattus norvegicus (Rat).